Consider the following 88-residue polypeptide: Large ribosomal subunit protein bL27 (88 aa).

The span at 1 to 13 shows a compositional bias: low complexity; the sequence is MATKKSGGSSSNG. The interval 1–24 is disordered; the sequence is MATKKSGGSSSNGRDSRGRRLGVK.

This sequence belongs to the bacterial ribosomal protein bL27 family.

The chain is Large ribosomal subunit protein bL27 from Ehrlichia ruminantium (strain Gardel).